The following is a 275-amino-acid chain: Protein rolling stone (275 aa).

The next 6 helical transmembrane spans lie at 45-65 (LLYR…CVIV), 72-92 (FFIY…LISA), 127-147 (WLYN…WVFL), 162-182 (IITH…IAFP), 185-205 (ILHM…TLIY), and 232-252 (MVTF…LFGL).

Expressed in cells of the somatic mesoderm, most notably the muscle founder cells, between embryonic stages 12 and 14, in growing muscle fibers in dorsal, lateral and ventral positions. At stage 16 strongest expression is in some ventral muscles and muscle 8. At stages 16/17 expression is restricted to some cells of the CNS, the brain and the gonads.

The protein resides in the membrane. Its function is as follows. May have a central role in the fusion process during myogenesis, within the somatic mesoderm. The protein is Protein rolling stone (rost) of Drosophila melanogaster (Fruit fly).